The sequence spans 202 residues: Ribosome maturation factor RimM (202 aa).

Residues 121 to 202 enclose the PRC barrel domain; that stretch reads ADEYYWVDLI…CITVDWQPDY (82 aa).

It belongs to the RimM family. In terms of assembly, binds ribosomal protein uS19.

The protein localises to the cytoplasm. Functionally, an accessory protein needed during the final step in the assembly of 30S ribosomal subunit, possibly for assembly of the head region. Essential for efficient processing of 16S rRNA. May be needed both before and after RbfA during the maturation of 16S rRNA. It has affinity for free ribosomal 30S subunits but not for 70S ribosomes. This chain is Ribosome maturation factor RimM, found in Polaromonas naphthalenivorans (strain CJ2).